The chain runs to 128 residues: uncharacterized protein (128 aa).

This is an uncharacterized protein from Gallus gallus (Chicken).